A 62-amino-acid chain; its full sequence is Pro-MCH variant (62 aa).

Positions 23–41 are NGE-like; sequence GSVAFPAENGVQDTESTQE. A disordered region spans residues 29 to 62; that stretch reads AENGVQDTESTQEKRETGDEENSAKFPIGRRDFD. The tract at residues 44–56 is NEI-like; sequence ETGDEENSAKFPI. The interval 60 to 62 is melanin-concentrating hormone-like; sequence DFD.

Belongs to the melanin-concentrating hormone family.

This is Pro-MCH variant (PMCHL1) from Pan paniscus (Pygmy chimpanzee).